Reading from the N-terminus, the 232-residue chain is Sugar fermentation stimulation protein homolog (232 aa).

Belongs to the SfsA family.

In Magnetococcus marinus (strain ATCC BAA-1437 / JCM 17883 / MC-1), this protein is Sugar fermentation stimulation protein homolog.